The following is a 677-amino-acid chain: Zinc finger protein 526 (677 aa).

3 C2H2-type zinc fingers span residues 57–79 (FMCS…QEQH), 109–131 (FQCG…QDAH), and 141–164 (YQCG…KAQH). A disordered region spans residues 167–190 (TAAAKPPVPPPLPPVTPPPPPPAP). The segment covering 172–190 (PPVPPPLPPVTPPPPPPAP) has biased composition (pro residues). A C2H2-type 4 zinc finger spans residues 198-220 (YECPECSTLCTTPEEFLEHQGTH). The segment covering 223–232 (SLEKEEHNGL) has biased composition (basic and acidic residues). Positions 223 to 300 (SLEKEEHNGL…RRASHGPASA (78 aa)) are disordered. A compositionally biased stretch (acidic residues) spans 233-257 (EEEEEDDEDDNEETEEEEEAAAEVG). 4 consecutive C2H2-type zinc fingers follow at residues 304–326 (FYCS…GRAH), 331–353 (HECT…LRLH), 359–381 (YLCV…RRAH), and 387–408 (HRCR…RRTH). Residues 408 to 449 (HAGKSGAPPSAAPPTVASAVASLAPAEPTPPPPAPPTPPAQL) form a disordered region. The span at 410 to 433 (GKSGAPPSAAPPTVASAVASLAPA) shows a compositional bias: low complexity. Residues 434–449 (EPTPPPPAPPTPPAQL) show a composition bias toward pro residues. C2H2-type zinc fingers lie at residues 449–472 (LPCP…RAVH), 479–501 (HRCG…LRTH), 507–529 (FQCH…QLTH), 535–557 (YQCL…RRLH), and 580–602 (YYCG…QRVH). Residues 608–627 (LTLQPPRSPPPAPPPPPEPQ) form a disordered region. Residues 613–626 (PRSPPPAPPPPPEP) show a composition bias toward pro residues.

The protein belongs to the krueppel C2H2-type zinc-finger protein family.

It is found in the nucleus. May be involved in transcriptional regulation. The protein is Zinc finger protein 526 (ZNF526) of Bos taurus (Bovine).